Here is a 475-residue protein sequence, read N- to C-terminus: MYLTILFLFVSSILLSLMFLLRKHLSHFSYQNLPPGKTGFPLIGESLSFLSEGRQGRPEKFVTDRVRRFISSSTGVFKTHLFGYPTAVMTGASGNKFLFTNENKLVVSWWPDSVKKIFPYTQSTYTDESKKLRILLMQFMKPEALRKYIGVMDEVAQRHFETLWTNQKQLIVYPLSKKLTFSVACRLFLSMDDPERVSKLEDRFNSVVTGIYSVPIDLPGTRFNRSIKASRLLRKEVCAIIGQRREELKAGRASAEQDVLSHMLMSVGETKDEDLANYLIGILIGGHDTAAIATTFIINYLAEYPHVYQRVLQEQKEILKEKKEEERLKWEDIEKMKYSWNVACEVMRLVPPLTGNFREAIDHFTFKGFYIPKGWKLYWSATATHMNPDYFPEPERFEPNRFEGSGPKPYSYIPFGGGPRMCPGREFARLEILVIIHNLVNRFKWEKVFPNENKIVVDPLPKPGNGLPIRIFPHF.

Residues 2–22 (YLTILFLFVSSILLSLMFLLR) form a helical membrane-spanning segment. Residue C422 participates in heme binding.

The protein belongs to the cytochrome P450 family. It depends on heme as a cofactor.

The protein localises to the membrane. The enzyme catalyses beta-amyrin + 3 reduced [NADPH--hemoprotein reductase] + 3 O2 = oleanolate + 3 oxidized [NADPH--hemoprotein reductase] + 4 H2O + 4 H(+). Its function is as follows. Catalyzes the oxidation of the methyl group to a carboxyl group at the C-28 position of beta-amyrin to form oleanolate. In Barbarea vulgaris (Yellow rocket), this protein is Beta-amyrin 28-monooxygenase.